We begin with the raw amino-acid sequence, 121 residues long: Small ribosomal subunit protein uS13 (121 aa).

Positions 94 to 121 (GLPVRGQNTKNNSRTRKGPRRTVANKKK) are disordered. Residues 106 to 121 (SRTRKGPRRTVANKKK) show a composition bias toward basic residues.

It belongs to the universal ribosomal protein uS13 family. As to quaternary structure, part of the 30S ribosomal subunit. Forms a loose heterodimer with protein S19. Forms two bridges to the 50S subunit in the 70S ribosome.

Its function is as follows. Located at the top of the head of the 30S subunit, it contacts several helices of the 16S rRNA. In the 70S ribosome it contacts the 23S rRNA (bridge B1a) and protein L5 of the 50S subunit (bridge B1b), connecting the 2 subunits; these bridges are implicated in subunit movement. Contacts the tRNAs in the A and P-sites. In Halalkalibacterium halodurans (strain ATCC BAA-125 / DSM 18197 / FERM 7344 / JCM 9153 / C-125) (Bacillus halodurans), this protein is Small ribosomal subunit protein uS13.